A 502-amino-acid chain; its full sequence is Protein adenylyltransferase Fic (502 aa).

Residues 1 to 24 (MAMATGKATEEEQPEQGQQQQQLQ) form a disordered region. Residues 15 to 24 (EQGQQQQQLQ) are compositionally biased toward low complexity. Residues 38-60 (FALFFIAGCLAAFGFHALTSSSG) traverse the membrane as a helical segment. TPR repeat units lie at residues 122-155 (AMGALRLAQEMYMTGKDDKAARLFEHALALAPKH) and 156-190 (PEVLLRYGEFLEHNQRNIVLADQYYFQALSINPSN). An Inhibitory (S/T)XXXE(G/N) motif motif is present at residues 247-252 (SVGIEG). Residues Glu-251 and 332-335 (VGGH) contribute to the ATP site. Positions 301 to 436 (ITLKDILELH…IRPFVRFIAD (136 aa)) constitute a Fido domain. Residue His-379 is part of the active site. Residues 383–390 (DGNGRTSR), 415–416 (YY), and Asn-423 contribute to the ATP site. The disordered stretch occupies residues 478–502 (SPELYESGSGSGAGAGAGSGQKGMP). Positions 486–502 (SGSGAGAGAGSGQKGMP) are enriched in gly residues.

It belongs to the fic family. Homodimer.

It is found in the membrane. It catalyses the reaction L-tyrosyl-[protein] + ATP = O-(5'-adenylyl)-L-tyrosyl-[protein] + diphosphate. The catalysed reaction is L-threonyl-[protein] + ATP = 3-O-(5'-adenylyl)-L-threonyl-[protein] + diphosphate. The enzyme catalyses 3-O-(5'-adenylyl)-L-threonyl-[protein] + H2O = L-threonyl-[protein] + AMP + H(+). Its activity is regulated as follows. The side chain of Glu-251 determines which of the two opposing activities (AMPylase or de-AMPylase) will take place. In response to endoplasmic reticulum stress, mediates de-AMPylase activity. Adenylyltransferase activity is inhibited by the inhibitory helix present at the N-terminus: Glu-251 binds ATP and competes with ATP-binding at Arg-390, thereby preventing adenylyltransferase activity. In unstressed cells, disengagement of Glu-251 promotes adenylyltransferase activity. Activation dissociates ATP-binding from Glu-251, allowing ordered binding of the entire ATP moiety with the alpha-phosphate in an orientation that is productive for accepting an incoming target hydroxyl side chain. Protein that can both mediate the addition of adenosine 5'-monophosphate (AMP) to specific residues of target proteins (AMPylation), and the removal of the same modification from target proteins (de-AMPylation), depending on the context. The side chain of Glu-251 determines which of the two opposing activities (AMPylase or de-AMPylase) will take place. Acts as a key regulator of the unfolded protein response (UPR) by mediating AMPylation or de-AMPylation of Hsc70-3/BiP. In unstressed cells, acts as an adenylyltransferase by mediating AMPylation of Hsc70-3/BiP at 'Thr-518', thereby inactivating it. In response to endoplasmic reticulum stress, acts as a phosphodiesterase by mediating removal of ATP (de-AMPylation) from Hsc70-3/BiP at 'Thr-518', leading to restore HSPA5/BiP activity. The chain is Protein adenylyltransferase Fic from Drosophila mojavensis (Fruit fly).